The sequence spans 137 residues: Large ribosomal subunit protein uL16c (137 aa).

This sequence belongs to the universal ribosomal protein uL16 family. Part of the 50S ribosomal subunit.

The protein resides in the plastid. This chain is Large ribosomal subunit protein uL16c, found in Aneura mirabilis (Parasitic liverwort).